The following is a 108-amino-acid chain: Nucleoid-associated protein ACP_0492 (108 aa).

The protein belongs to the YbaB/EbfC family. As to quaternary structure, homodimer.

The protein localises to the cytoplasm. It is found in the nucleoid. Binds to DNA and alters its conformation. May be involved in regulation of gene expression, nucleoid organization and DNA protection. The chain is Nucleoid-associated protein ACP_0492 from Acidobacterium capsulatum (strain ATCC 51196 / DSM 11244 / BCRC 80197 / JCM 7670 / NBRC 15755 / NCIMB 13165 / 161).